A 375-amino-acid polypeptide reads, in one-letter code: Serpin B5 (375 aa).

Residues Asn-99, Asn-133, Asn-188, and Asn-361 are each glycosylated (N-linked (GlcNAc...) asparagine).

It belongs to the serpin family. Ov-serpin subfamily. In terms of assembly, interacts with IRF6. As to expression, normal mammary epithelial cells.

Its subcellular location is the secreted. It is found in the extracellular space. Tumor suppressor. It blocks the growth, invasion, and metastatic properties of mammary tumors. As it does not undergo the S (stressed) to R (relaxed) conformational transition characteristic of active serpins, it exhibits no serine protease inhibitory activity. The sequence is that of Serpin B5 (SERPINB5) from Homo sapiens (Human).